A 399-amino-acid polypeptide reads, in one-letter code: 1-deoxy-D-xylulose 5-phosphate reductoisomerase (399 aa).

T11, G12, S13, I14, and N125 together coordinate NADPH. K126 lines the 1-deoxy-D-xylulose 5-phosphate pocket. E127 contacts NADPH. Residue D151 coordinates Mn(2+). 4 residues coordinate 1-deoxy-D-xylulose 5-phosphate: S152, E153, S186, and H209. E153 is a Mn(2+) binding site. Position 215 (G215) interacts with NADPH. Residues S222, N227, K228, and E231 each contribute to the 1-deoxy-D-xylulose 5-phosphate site. Residue E231 participates in Mn(2+) binding.

The protein belongs to the DXR family. Mg(2+) serves as cofactor. Mn(2+) is required as a cofactor.

The enzyme catalyses 2-C-methyl-D-erythritol 4-phosphate + NADP(+) = 1-deoxy-D-xylulose 5-phosphate + NADPH + H(+). It functions in the pathway isoprenoid biosynthesis; isopentenyl diphosphate biosynthesis via DXP pathway; isopentenyl diphosphate from 1-deoxy-D-xylulose 5-phosphate: step 1/6. Functionally, catalyzes the NADPH-dependent rearrangement and reduction of 1-deoxy-D-xylulose-5-phosphate (DXP) to 2-C-methyl-D-erythritol 4-phosphate (MEP). The sequence is that of 1-deoxy-D-xylulose 5-phosphate reductoisomerase from Acinetobacter baumannii (strain SDF).